Here is a 395-residue protein sequence, read N- to C-terminus: F-box protein At5g46170 (395 aa).

The region spanning 24-72 is the F-box domain; it reads IDHFDHLPDSILLLVFNKIGDVKALGRCCVVSRRFHSLVPQVDNVVVRV. Residues 122 to 158 are disordered; the sequence is TKRSSSSCGGSGSSSSSLSISGDDDGGEIEQGGVTHH. Residues 125-142 are compositionally biased toward low complexity; sequence SSSSCGGSGSSSSSLSIS.

The polypeptide is F-box protein At5g46170 (Arabidopsis thaliana (Mouse-ear cress)).